The sequence spans 131 residues: Pancreatic polypeptide prohormone (131 aa).

Positions 1–29 (MAAAHRCLFLLLLSTCVALLLQPPLGALG) are cleaved as a signal peptide. Tyrosine amide is present on tyrosine 65.

The protein belongs to the NPY family.

It localises to the secreted. In terms of biological role, hormone secreted by pancreatic cells that acts as a regulator of pancreatic and gastrointestinal functions probably by signaling through the G protein-coupled receptor NPY4R2. In Bos taurus (Bovine), this protein is Pancreatic polypeptide prohormone (PPY).